The sequence spans 103 residues: ATP synthase subunit f, mitochondrial (103 aa).

The N-terminal 6 residues, 1–6, are a transit peptide targeting the mitochondrion; the sequence is MIFRRQ.

In terms of assembly, F-type ATP synthases have 2 components, the catalytic core F(1) and the membrane-embedded component F(0), linked together by a central stalk and a peripheral stalk. The central stalk, also called rotor shaft, is often seen as part of F(1). The peripheral stalk is seen as part of F(0). F(0) contains the membrane channel next to the rotor. F-type ATP synthases form dimers but each monomer functions independently in ATP generation. The dimer consists of 17 different polypeptides: ATP1 (subunit alpha, 3 molecules per monomer, part of F(1)), ATP2 (subunit beta, 3 copies per monomer, part of F(1)), ATP3 (subunit gamma, part of the central stalk), ATP4 (subunit b, part of the peripheral stalk), ATP5/OSCP (subunit 5/OSCP, part of the peripheral stalk), ATP6 (subunit a, part of the peripheral stalk), ATP7 (subunit d, part of the peripheral stalk), ATP8 (subunit 8, part of the peripheral stalk), OLI1 (subunit c, part of the rotor, 10 molecules per monomer), ATP14 (subunit h, part of the peripheral stalk), ATP15 (subunit epsilon, part of the central stalk), ATP16 (subunit delta, part of the central stalk), ATP17 (subunit f, part of the peripheral stalk), ATP18 (subunit i/j, part of the peripheral stalk), ATP19 (subunit k, dimer-specific, at interface between monomers), ATP20 (subunit g, at interface between monomers), TIM11 (subunit e, at interface between monomers).

The protein localises to the mitochondrion inner membrane. In terms of biological role, mitochondrial membrane ATP synthase (F(1)F(0) ATP synthase or Complex V) produces ATP from ADP in the presence of a proton gradient across the membrane which is generated by electron transport complexes of the respiratory chain. F-type ATP synthases consist of two structural domains, F(1) - containing the extramembraneous catalytic core, and F(0) - containing the membrane proton channel, linked together by a central stalk and a peripheral stalk. During catalysis, ATP synthesis in the catalytic domain of F(1) is coupled via a rotary mechanism of the central stalk subunits to proton translocation. Part of the complex F(0) domain. Minor subunit located with subunit a/ATP6 in the membrane. In Yarrowia lipolytica (strain CLIB 122 / E 150) (Yeast), this protein is ATP synthase subunit f, mitochondrial.